The following is a 280-amino-acid chain: Large ribosomal subunit protein uL2 (280 aa).

3 disordered regions span residues 1–20 (MAIR…SVSM), 29–58 (PEKS…GGGH), and 225–280 (VMNP…NKKR). Residues 45 to 58 (SHGHITTRHRGGGH) are compositionally biased toward basic residues. A compositionally biased stretch (basic and acidic residues) spans 253–269 (KEGRTRRPKRYSDDMIV). Basic residues predominate over residues 270-280 (RRRRANKNKKR).

The protein belongs to the universal ribosomal protein uL2 family. Part of the 50S ribosomal subunit. Forms a bridge to the 30S subunit in the 70S ribosome.

One of the primary rRNA binding proteins. Required for association of the 30S and 50S subunits to form the 70S ribosome, for tRNA binding and peptide bond formation. It has been suggested to have peptidyltransferase activity; this is somewhat controversial. Makes several contacts with the 16S rRNA in the 70S ribosome. In Corynebacterium efficiens (strain DSM 44549 / YS-314 / AJ 12310 / JCM 11189 / NBRC 100395), this protein is Large ribosomal subunit protein uL2.